We begin with the raw amino-acid sequence, 306 residues long: Pentalenolactone F synthase (306 aa).

2 residues coordinate Fe cation: His110 and Asp112. Positions 138 and 258 each coordinate 2-oxoglutarate. His273 is a binding site for Fe cation. Arg284 contributes to the 2-oxoglutarate binding site.

Belongs to the TfdA dioxygenase family. The cofactor is Fe(2+).

The enzyme catalyses pentalenolactone D + 2 2-oxoglutarate + 2 O2 = pentalenolactone F + 2 succinate + 2 CO2 + H2O. It functions in the pathway antibiotic biosynthesis; neopentalenolactone biosynthesis. Its activity is regulated as follows. Activated by ascorbate. Functionally, catalyzes the Fe(2+) and alpha-ketoglutarate-dependent oxidation of pentalenolactone D to pentalenolactone F. Also able to catalyze the oxidation of pentalenolactone D to pentalenolactone E. In presence of neopentalenolactone D, mediates production of PL308 and possibly neopentalenolactone E. This chain is Pentalenolactone F synthase (ptlD), found in Streptomyces avermitilis (strain ATCC 31267 / DSM 46492 / JCM 5070 / NBRC 14893 / NCIMB 12804 / NRRL 8165 / MA-4680).